The following is a 185-amino-acid chain: Large ribosomal subunit protein uL16m (185 aa).

The protein belongs to the universal ribosomal protein uL16 family.

Its subcellular location is the mitochondrion. The polypeptide is Large ribosomal subunit protein uL16m (RPL16) (Oryza sativa subsp. japonica (Rice)).